A 544-amino-acid chain; its full sequence is Membrane protein insertase YidC (544 aa).

The helical transmembrane segment at Asn-6–Asp-26 threads the bilayer. Residues Ser-112–Thr-132 are disordered. 4 helical membrane-spanning segments follow: residues Lys-343–Val-363, Leu-418–Leu-438, Leu-456–Ile-476, and Pro-497–Val-517.

The protein belongs to the OXA1/ALB3/YidC family. Type 1 subfamily. In terms of assembly, interacts with the Sec translocase complex via SecD. Specifically interacts with transmembrane segments of nascent integral membrane proteins during membrane integration.

It localises to the cell inner membrane. Its function is as follows. Required for the insertion and/or proper folding and/or complex formation of integral membrane proteins into the membrane. Involved in integration of membrane proteins that insert both dependently and independently of the Sec translocase complex, as well as at least some lipoproteins. Aids folding of multispanning membrane proteins. This is Membrane protein insertase YidC from Pectobacterium carotovorum subsp. carotovorum (strain PC1).